The primary structure comprises 299 residues: NAD kinase (299 aa).

Asp64 (proton acceptor) is an active-site residue. NAD(+) contacts are provided by residues 64–65 (DG), 138–139 (ND), Arg149, Arg166, Asp168, 179–184 (TGYAVS), and Gln238.

The protein belongs to the NAD kinase family. Requires a divalent metal cation as cofactor.

Its subcellular location is the cytoplasm. It carries out the reaction NAD(+) + ATP = ADP + NADP(+) + H(+). Functionally, involved in the regulation of the intracellular balance of NAD and NADP, and is a key enzyme in the biosynthesis of NADP. Catalyzes specifically the phosphorylation on 2'-hydroxyl of the adenosine moiety of NAD to yield NADP. The sequence is that of NAD kinase from Nitratidesulfovibrio vulgaris (strain ATCC 29579 / DSM 644 / CCUG 34227 / NCIMB 8303 / VKM B-1760 / Hildenborough) (Desulfovibrio vulgaris).